The chain runs to 1372 residues: DNA-directed RNA polymerase subunit beta (1372 aa).

The protein belongs to the RNA polymerase beta chain family. As to quaternary structure, the RNAP catalytic core consists of 2 alpha, 1 beta, 1 beta' and 1 omega subunit. When a sigma factor is associated with the core the holoenzyme is formed, which can initiate transcription.

It carries out the reaction RNA(n) + a ribonucleoside 5'-triphosphate = RNA(n+1) + diphosphate. DNA-dependent RNA polymerase catalyzes the transcription of DNA into RNA using the four ribonucleoside triphosphates as substrates. In Nitratidesulfovibrio vulgaris (strain ATCC 29579 / DSM 644 / CCUG 34227 / NCIMB 8303 / VKM B-1760 / Hildenborough) (Desulfovibrio vulgaris), this protein is DNA-directed RNA polymerase subunit beta.